The primary structure comprises 359 residues: Cytohesin-interacting protein (359 aa).

The PDZ domain maps to 77–166 (VVTVEKQDNG…LLTIETLNGT (90 aa)). Positions 165–188 (GTMIHRRAELEAKLQTLKQTLKKK) form a coiled coil. Residues 166–188 (TMIHRRAELEAKLQTLKQTLKKK) are interaction with CYTH1.

As to quaternary structure, interacts with CYTH1 and SNX27.

The protein resides in the cytoplasm. It localises to the early endosome. Functionally, by its binding to cytohesin-1 (CYTH1), it modifies activation of ARFs by CYTH1 and its precise function may be to sequester CYTH1 in the cytoplasm. This is Cytohesin-interacting protein (Cytip) from Mus musculus (Mouse).